Consider the following 1070-residue polypeptide: Ubiquitin-protein ligase E3B (1070 aa).

An N-acetylmethionine modification is found at methionine 1. An IQ domain is found at 29–58 (RERSAVTIQALVRSFLCRRRLHRDIRKEID). Serine 421 is subject to Phosphoserine. Residues 704 to 1070 (SQHAMKGVIR…ISMNTGFELS (367 aa)) form the HECT domain. Residue cysteine 1038 is the Glycyl thioester intermediate of the active site.

Widely expressed. High expression is observed in developing central nervous system.

Its subcellular location is the postsynaptic density. It carries out the reaction S-ubiquitinyl-[E2 ubiquitin-conjugating enzyme]-L-cysteine + [acceptor protein]-L-lysine = [E2 ubiquitin-conjugating enzyme]-L-cysteine + N(6)-ubiquitinyl-[acceptor protein]-L-lysine.. It participates in protein modification; protein ubiquitination. In terms of biological role, E3 ubiquitin-protein ligase which accepts ubiquitin from an E2 ubiquitin-conjugating enzyme in the form of a thioester and then directly transfers the ubiquitin to targeted substrates. Ubiquitinates BCKDK and targets it for degradation, thereby regulating various metabolic processes. Involved in the positive regulation of neurite branching in hippocampal neurons and the control of neuronal spine number and morphology, through the ubiquitination of PPP3CC. The sequence is that of Ubiquitin-protein ligase E3B (Ube3b) from Mus musculus (Mouse).